The primary structure comprises 359 residues: 3-isopropylmalate dehydrogenase (359 aa).

77-88 provides a ligand contact to NAD(+); the sequence is GPKWGTGDVRPE. R95, R105, R134, and D223 together coordinate substrate. 3 residues coordinate Mg(2+): D223, D248, and D252. 287–298 provides a ligand contact to NAD(+); it reads GSAPDLPAGKVN.

It belongs to the isocitrate and isopropylmalate dehydrogenases family. In terms of assembly, homodimer. Requires Mg(2+) as cofactor. Mn(2+) serves as cofactor.

The protein resides in the cytoplasm. The catalysed reaction is (2R,3S)-3-isopropylmalate + NAD(+) = 4-methyl-2-oxopentanoate + CO2 + NADH. It participates in amino-acid biosynthesis; L-leucine biosynthesis; L-leucine from 3-methyl-2-oxobutanoate: step 3/4. In terms of biological role, catalyzes the oxidation of 3-carboxy-2-hydroxy-4-methylpentanoate (3-isopropylmalate) to 3-carboxy-4-methyl-2-oxopentanoate. The product decarboxylates to 4-methyl-2 oxopentanoate. The chain is 3-isopropylmalate dehydrogenase (LEU2) from Diutina rugosa (Yeast).